A 427-amino-acid polypeptide reads, in one-letter code: Phosphoribosylamine--glycine ligase (427 aa).

The region spanning 110 to 315 (KDFCQRHGLP…IVPILLAAAK (206 aa)) is the ATP-grasp domain. 136–196 (LDTLEAPFVI…EEFMHGEEAS (61 aa)) provides a ligand contact to ATP. Mg(2+)-binding residues include E285 and N287.

This sequence belongs to the GARS family. The cofactor is Mg(2+). Mn(2+) serves as cofactor.

It catalyses the reaction 5-phospho-beta-D-ribosylamine + glycine + ATP = N(1)-(5-phospho-beta-D-ribosyl)glycinamide + ADP + phosphate + H(+). The protein operates within purine metabolism; IMP biosynthesis via de novo pathway; N(1)-(5-phospho-D-ribosyl)glycinamide from 5-phospho-alpha-D-ribose 1-diphosphate: step 2/2. This chain is Phosphoribosylamine--glycine ligase, found in Caulobacter vibrioides (strain ATCC 19089 / CIP 103742 / CB 15) (Caulobacter crescentus).